Here is a 1220-residue protein sequence, read N- to C-terminus: DNA-directed RNA polymerase subunit beta' (1220 aa).

Positions 61, 63, 76, and 79 each coordinate Zn(2+). The Mg(2+) site is built by D450, D452, and D454. The disordered stretch occupies residues 1197–1220 (QPESESEEASDIPKLDDVAKTFDN). Residues 1207-1220 (DIPKLDDVAKTFDN) are compositionally biased toward basic and acidic residues.

Belongs to the RNA polymerase beta' chain family. The RNAP catalytic core consists of 2 alpha, 1 beta, 1 beta' and 1 omega subunit. When a sigma factor is associated with the core the holoenzyme is formed, which can initiate transcription. Mg(2+) is required as a cofactor. It depends on Zn(2+) as a cofactor.

It carries out the reaction RNA(n) + a ribonucleoside 5'-triphosphate = RNA(n+1) + diphosphate. Functionally, DNA-dependent RNA polymerase catalyzes the transcription of DNA into RNA using the four ribonucleoside triphosphates as substrates. The chain is DNA-directed RNA polymerase subunit beta' from Leuconostoc mesenteroides subsp. mesenteroides (strain ATCC 8293 / DSM 20343 / BCRC 11652 / CCM 1803 / JCM 6124 / NCDO 523 / NBRC 100496 / NCIMB 8023 / NCTC 12954 / NRRL B-1118 / 37Y).